Consider the following 95-residue polypeptide: Co-chaperonin GroES (95 aa).

The protein belongs to the GroES chaperonin family. As to quaternary structure, heptamer of 7 subunits arranged in a ring. Interacts with the chaperonin GroEL.

The protein localises to the cytoplasm. Functionally, together with the chaperonin GroEL, plays an essential role in assisting protein folding. The GroEL-GroES system forms a nano-cage that allows encapsulation of the non-native substrate proteins and provides a physical environment optimized to promote and accelerate protein folding. GroES binds to the apical surface of the GroEL ring, thereby capping the opening of the GroEL channel. The polypeptide is Co-chaperonin GroES (Rickettsia canadensis (strain McKiel)).